Consider the following 523-residue polypeptide: Acetyl-coenzyme A carboxylase carboxyl transferase subunit beta, chloroplastic (523 aa).

The CoA carboxyltransferase N-terminal domain maps to 224–523; the sequence is FWVICENCHK…FVPSNQNSIK (300 aa). Zn(2+)-binding residues include C228, C231, C247, and C250. Residues 228–250 form a C4-type zinc finger; that stretch reads CENCHKFNYKRLFKSKMNICEEC.

This sequence belongs to the AccD/PCCB family. Acetyl-CoA carboxylase is a heterohexamer composed of biotin carboxyl carrier protein, biotin carboxylase and 2 subunits each of ACCase subunit alpha and ACCase plastid-coded subunit beta (accD). Requires Zn(2+) as cofactor.

Its subcellular location is the plastid. The protein localises to the chloroplast stroma. It carries out the reaction N(6)-carboxybiotinyl-L-lysyl-[protein] + acetyl-CoA = N(6)-biotinyl-L-lysyl-[protein] + malonyl-CoA. It functions in the pathway lipid metabolism; malonyl-CoA biosynthesis; malonyl-CoA from acetyl-CoA: step 1/1. Its function is as follows. Component of the acetyl coenzyme A carboxylase (ACC) complex. Biotin carboxylase (BC) catalyzes the carboxylation of biotin on its carrier protein (BCCP) and then the CO(2) group is transferred by the transcarboxylase to acetyl-CoA to form malonyl-CoA. This chain is Acetyl-coenzyme A carboxylase carboxyl transferase subunit beta, chloroplastic, found in Cucumis sativus (Cucumber).